The chain runs to 313 residues: Recombination-promoting nuclease pSLT051 (313 aa).

Belongs to the Rpn/YhgA-like nuclease family.

A low activity DNA endonuclease probably yielding 3'-hydroxyl ends. Involved in RecA-independent recombination and horizontal gene transfer. The chain is Recombination-promoting nuclease pSLT051 from Salmonella typhimurium (strain LT2 / SGSC1412 / ATCC 700720).